A 147-amino-acid chain; its full sequence is Hemoglobin subunit beta-H1 (147 aa).

The 145-residue stretch at 3–147 (HFTAEEKAAI…VANALSHKYH (145 aa)) folds into the Globin domain. Positions 64 and 93 each coordinate heme b.

It belongs to the globin family. In terms of assembly, heterotetramer of two alpha chains and two beta chains. In terms of tissue distribution, red blood cells.

This is an embryonic beta-type chain. The sequence is that of Hemoglobin subunit beta-H1 (Hbb-bh1) from Mus musculus (Mouse).